A 179-amino-acid chain; its full sequence is NADH-quinone oxidoreductase subunit I (179 aa).

2 4Fe-4S ferredoxin-type domains span residues 49-79 (LTRDPDGEERCVACNLCAVACPVACISLQKG) and 89-118 (EFFRINFSRCIFCGLCEEACPTSAIQLTPD). Residues cysteine 59, cysteine 62, cysteine 65, cysteine 69, cysteine 98, cysteine 101, cysteine 104, and cysteine 108 each contribute to the [4Fe-4S] cluster site.

Belongs to the complex I 23 kDa subunit family. As to quaternary structure, NDH-1 is composed of 14 different subunits. Subunits NuoA, H, J, K, L, M, N constitute the membrane sector of the complex. Requires [4Fe-4S] cluster as cofactor.

It is found in the cell inner membrane. The enzyme catalyses a quinone + NADH + 5 H(+)(in) = a quinol + NAD(+) + 4 H(+)(out). In terms of biological role, NDH-1 shuttles electrons from NADH, via FMN and iron-sulfur (Fe-S) centers, to quinones in the respiratory chain. The immediate electron acceptor for the enzyme in this species is believed to be ubiquinone. Couples the redox reaction to proton translocation (for every two electrons transferred, four hydrogen ions are translocated across the cytoplasmic membrane), and thus conserves the redox energy in a proton gradient. This chain is NADH-quinone oxidoreductase subunit I, found in Chromohalobacter salexigens (strain ATCC BAA-138 / DSM 3043 / CIP 106854 / NCIMB 13768 / 1H11).